Reading from the N-terminus, the 297-residue chain is MSLKPYATPTYWQRVKVAFQYIFPQLPVTRLAGWLAEQKWGAVTHFIIRTFAKQYKVNLSEAQKSNASDYATFNEFFIRPLKENARPINQDAQALCLPADGKVSESGKIEDDRLLQAKGHFFTLETLLANDQEMANKFKDGHFITTYLSPRDYHRVHMPCDATLRKMIYVPGELFSVNPFLAEHVPNLFARNERVICEFETEFGPMVQILVGATITASMSTVWAGIINPPRTKEVVEYHYETSGETAVHLKKGQEMGAFRLGSTVINLFPKDSVEFEAHLQAGVETRMGERLAKIVK.

Catalysis depends on charge relay system; for autoendoproteolytic cleavage activity residues Asp100, His157, and Ser263. The Schiff-base intermediate with substrate; via pyruvic acid; for decarboxylase activity role is filled by Ser263. Ser263 carries the post-translational modification Pyruvic acid (Ser); by autocatalysis.

The protein belongs to the phosphatidylserine decarboxylase family. PSD-B subfamily. Prokaryotic type I sub-subfamily. As to quaternary structure, heterodimer of a large membrane-associated beta subunit and a small pyruvoyl-containing alpha subunit. It depends on pyruvate as a cofactor. In terms of processing, is synthesized initially as an inactive proenzyme. Formation of the active enzyme involves a self-maturation process in which the active site pyruvoyl group is generated from an internal serine residue via an autocatalytic post-translational modification. Two non-identical subunits are generated from the proenzyme in this reaction, and the pyruvate is formed at the N-terminus of the alpha chain, which is derived from the carboxyl end of the proenzyme. The autoendoproteolytic cleavage occurs by a canonical serine protease mechanism, in which the side chain hydroxyl group of the serine supplies its oxygen atom to form the C-terminus of the beta chain, while the remainder of the serine residue undergoes an oxidative deamination to produce ammonia and the pyruvoyl prosthetic group on the alpha chain. During this reaction, the Ser that is part of the protease active site of the proenzyme becomes the pyruvoyl prosthetic group, which constitutes an essential element of the active site of the mature decarboxylase.

It is found in the cell membrane. The enzyme catalyses a 1,2-diacyl-sn-glycero-3-phospho-L-serine + H(+) = a 1,2-diacyl-sn-glycero-3-phosphoethanolamine + CO2. It participates in phospholipid metabolism; phosphatidylethanolamine biosynthesis; phosphatidylethanolamine from CDP-diacylglycerol: step 2/2. Catalyzes the formation of phosphatidylethanolamine (PtdEtn) from phosphatidylserine (PtdSer). The protein is Phosphatidylserine decarboxylase proenzyme of Actinobacillus pleuropneumoniae serotype 5b (strain L20).